We begin with the raw amino-acid sequence, 333 residues long: MVRIATYASHSALQILKGAKDEGFGTIAFGKPRVKLLYTKYFPVADYFLEGDYPEDKLLELDAVVIPTGSFIAHLGVELVEKMRVPYFGNKEVLKWESDRSLERKWLEKAKLTLPRIYEDPDDIDRPVIVKPHGAKGGRGYFIAKSSKDFWEKAEKFLGIRSKEDLKNVQIQEYVVGVPIYPHYFYSKITGELELMSIDRRYESNVDAIGRIPSREQLDLDLDVTYTVVGNIPLVLRESLLMDVIEAGERVVKASEELMGGLWGPFCLEGVFTPDMEFVVFEISARIVAGTNLFINGSPYTWLKYDEPMSTGRRIAREIKIAIEEGKLEEVVT.

Residues His10 and Ser70 each coordinate 5-amino-1-(5-phospho-beta-D-ribosyl)imidazole-4-carboxamide. The ATP-grasp domain maps to 91–324 (KEVLKWESDR…IAREIKIAIE (234 aa)). ATP contacts are provided by residues 121 to 181 (PDDI…VPIY) and Glu203. 5-amino-1-(5-phospho-beta-D-ribosyl)imidazole-4-carboxamide is bound at residue Asn231. Residues Glu269 and Glu282 each coordinate Mg(2+).

This sequence belongs to the phosphohexose mutase family. It depends on Mg(2+) as a cofactor. Mn(2+) serves as cofactor.

The catalysed reaction is 5-amino-1-(5-phospho-beta-D-ribosyl)imidazole-4-carboxamide + formate + ATP = 5-formamido-1-(5-phospho-D-ribosyl)imidazole-4-carboxamide + ADP + phosphate. The protein operates within purine metabolism; IMP biosynthesis via de novo pathway; 5-formamido-1-(5-phospho-D-ribosyl)imidazole-4-carboxamide from 5-amino-1-(5-phospho-D-ribosyl)imidazole-4-carboxamide (formate route): step 1/1. Its function is as follows. Catalyzes the ATP- and formate-dependent formylation of 5-aminoimidazole-4-carboxamide-1-beta-d-ribofuranosyl 5'-monophosphate (AICAR) to 5-formaminoimidazole-4-carboxamide-1-beta-d-ribofuranosyl 5'-monophosphate (FAICAR) in the absence of folates. The sequence is that of 5-formaminoimidazole-4-carboxamide-1-(beta)-D-ribofuranosyl 5'-monophosphate synthetase from Pyrococcus horikoshii (strain ATCC 700860 / DSM 12428 / JCM 9974 / NBRC 100139 / OT-3).